The following is a 940-amino-acid chain: Isoleucine--tRNA ligase (940 aa).

The short motif at 58–68 (PYANGDIHIGH) is the 'HIGH' region element. An L-isoleucyl-5'-AMP-binding site is contributed by E564. The 'KMSKS' region signature appears at 605-609 (KMSKS). K608 contributes to the ATP binding site. 4 residues coordinate Zn(2+): C903, C906, C923, and C926.

This sequence belongs to the class-I aminoacyl-tRNA synthetase family. IleS type 1 subfamily. Monomer. The cofactor is Zn(2+).

The protein localises to the cytoplasm. The catalysed reaction is tRNA(Ile) + L-isoleucine + ATP = L-isoleucyl-tRNA(Ile) + AMP + diphosphate. In terms of biological role, catalyzes the attachment of isoleucine to tRNA(Ile). As IleRS can inadvertently accommodate and process structurally similar amino acids such as valine, to avoid such errors it has two additional distinct tRNA(Ile)-dependent editing activities. One activity is designated as 'pretransfer' editing and involves the hydrolysis of activated Val-AMP. The other activity is designated 'posttransfer' editing and involves deacylation of mischarged Val-tRNA(Ile). This is Isoleucine--tRNA ligase from Shewanella halifaxensis (strain HAW-EB4).